The primary structure comprises 868 residues: Leucine--tRNA ligase (868 aa).

A 'HIGH' region motif is present at residues 42–52; it reads PYPSGKLHMGH. A 'KMSKS' region motif is present at residues 627-631; it reads KMSKS. Position 630 (Lys630) interacts with ATP.

Belongs to the class-I aminoacyl-tRNA synthetase family.

Its subcellular location is the cytoplasm. The enzyme catalyses tRNA(Leu) + L-leucine + ATP = L-leucyl-tRNA(Leu) + AMP + diphosphate. The sequence is that of Leucine--tRNA ligase from Pseudomonas putida (strain ATCC 700007 / DSM 6899 / JCM 31910 / BCRC 17059 / LMG 24140 / F1).